We begin with the raw amino-acid sequence, 470 residues long: Chromosomal replication initiator protein DnaA (470 aa).

Positions 1–89 (MIESNHVVLW…YNVMVDKTSI (89 aa)) are domain I, interacts with DnaA modulators. Residues 89–130 (IPNQTVNLEASNRSTAVTPKSIVGGNKAPSFLKAPAVQDLDP) are domain II. Residues 131–348 (HLNPNYNFEN…GIVIAIMARS (218 aa)) form a domain III, AAA+ region region. The ATP site is built by Gly-176, Gly-178, Lys-179, and Thr-180. The tract at residues 349 to 470 (TIFNKEIDLD…EIESLLKKKA (122 aa)) is domain IV, binds dsDNA.

Belongs to the DnaA family. As to quaternary structure, oligomerizes as a right-handed, spiral filament on DNA at oriC.

The protein localises to the cytoplasm. Functionally, plays an essential role in the initiation and regulation of chromosomal replication. ATP-DnaA binds to the origin of replication (oriC) to initiate formation of the DNA replication initiation complex once per cell cycle. Binds the DnaA box (a 9 base pair repeat at the origin) and separates the double-stranded (ds)DNA. Forms a right-handed helical filament on oriC DNA; dsDNA binds to the exterior of the filament while single-stranded (ss)DNA is stabiized in the filament's interior. The ATP-DnaA-oriC complex binds and stabilizes one strand of the AT-rich DNA unwinding element (DUE), permitting loading of DNA polymerase. After initiation quickly degrades to an ADP-DnaA complex that is not apt for DNA replication. Binds acidic phospholipids. The chain is Chromosomal replication initiator protein DnaA from Bacteroides thetaiotaomicron (strain ATCC 29148 / DSM 2079 / JCM 5827 / CCUG 10774 / NCTC 10582 / VPI-5482 / E50).